Reading from the N-terminus, the 209-residue chain is uncharacterized protein (209 aa).

The region spanning 1 to 199 (MQVFLDLDET…DELKRVTASL (199 aa)) is the FCP1 homology domain.

This is an uncharacterized protein from Dryophytes versicolor (chameleon treefrog).